Consider the following 571-residue polypeptide: Urease subunit alpha (571 aa).

The Urease domain occupies 129–571 (GGIDTHIHFI…LPMAQRYFLF (443 aa)). 3 residues coordinate Ni(2+): H134, H136, and K217. K217 carries the N6-carboxylysine modification. H219 contributes to the substrate binding site. Residues H246 and H272 each coordinate Ni(2+). The active-site Proton donor is the H320. D360 provides a ligand contact to Ni(2+).

Belongs to the metallo-dependent hydrolases superfamily. Urease alpha subunit family. As to quaternary structure, heterotrimer of UreA (gamma), UreB (beta) and UreC (alpha) subunits. Three heterotrimers associate to form the active enzyme. The cofactor is Ni cation. Post-translationally, carboxylation allows a single lysine to coordinate two nickel ions.

Its subcellular location is the cytoplasm. The enzyme catalyses urea + 2 H2O + H(+) = hydrogencarbonate + 2 NH4(+). Its pathway is nitrogen metabolism; urea degradation; CO(2) and NH(3) from urea (urease route): step 1/1. The protein is Urease subunit alpha of Cupriavidus pinatubonensis (strain JMP 134 / LMG 1197) (Cupriavidus necator (strain JMP 134)).